A 785-amino-acid chain; its full sequence is Ribosome biogenesis protein BOP1 homolog (785 aa).

A compositionally biased stretch (basic residues) spans 1-11; sequence MTKKLTIKRKV. Residues 1–160 form a disordered region; the sequence is MTKKLTIKRK…DSDTSDEEDI (160 aa). 3 stretches are compositionally biased toward acidic residues: residues 45–54, 61–73, and 85–102; these read EDSTDDEGID, SSED…DEEG, and SGDD…EDDA. Basic and acidic residues predominate over residues 103–112; sequence DAKKSSKNND. Residues 150 to 159 are compositionally biased toward acidic residues; sequence ADSDTSDEED. 7 WD repeats span residues 446–487, 489–527, 571–613, 616–654, 657–696, 700–739, and 755–785; these read GHTD…RTIE, EDVV…KLLV, THFK…SQIP, KSKG…LIKK, TNSK…KPYQ, LHRN…DLLQ, and REEF…RLFT.

The protein belongs to the WD repeat BOP1/ERB1 family.

The protein resides in the nucleus. It localises to the nucleolus. It is found in the nucleoplasm. Its function is as follows. Required for maturation of ribosomal RNAs and formation of the large ribosomal subunit. In Drosophila persimilis (Fruit fly), this protein is Ribosome biogenesis protein BOP1 homolog.